The primary structure comprises 446 residues: Branched-chain amino acid permease BrnQ (446 aa).

12 helical membrane-spanning segments follow: residues 13-33 (ISSMLFGLFFGAGNLIFPAYL), 41-61 (LWISLLGFLITGVGLPLLAIA), 81-101 (KYSYFFTCLLYLTIGPFFAIP), 120-140 (MAKSTGLFIFSLIFFAIMLFF), 154-174 (FLTPAFLLFFFFIMIMALLHP), 196-216 (VLAGYNTMDALAGLAFGIIVI), 237-257 (TGVLTCLLMAVIYAITALVGA), 285-305 (GAVIFALMIFVACLKTAIGLI), 325-345 (WAIIFSLLAFGIANVGLTTII), 347-367 (FSLPVLMLLYPLAISLILLAL), 381-401 (IMTAVTFLCALGDFFKALPAG), and 421-441 (GLGWLVPVTVIFAILAIKGVI).

It belongs to the branched chain amino acid transporter family.

The protein resides in the cell membrane. Its activity is regulated as follows. Leucine uptake is inhibited by the proton ionophore carbonyl cyanide m-chlorophenylhydrazone (CCCP). In terms of biological role, branched chain amino acid transport system which is involved in the uptake of leucine, valine and isoleucine. The proton motive force is probably the driving force for transport. The sequence is that of Branched-chain amino acid permease BrnQ from Lactobacillus delbrueckii subsp. lactis.